Consider the following 226-residue polypeptide: Phosphoribosylformylglycinamidine synthase subunit PurQ (226 aa).

In terms of domain architecture, Glutamine amidotransferase type-1 spans 3–226 (RVAVIRFPGT…FESLVEWCRS (224 aa)). Residue C86 is the Nucleophile of the active site. Residues H199 and E201 contribute to the active site.

In terms of assembly, part of the FGAM synthase complex composed of 1 PurL, 1 PurQ and 2 PurS subunits.

Its subcellular location is the cytoplasm. The catalysed reaction is N(2)-formyl-N(1)-(5-phospho-beta-D-ribosyl)glycinamide + L-glutamine + ATP + H2O = 2-formamido-N(1)-(5-O-phospho-beta-D-ribosyl)acetamidine + L-glutamate + ADP + phosphate + H(+). It carries out the reaction L-glutamine + H2O = L-glutamate + NH4(+). Its pathway is purine metabolism; IMP biosynthesis via de novo pathway; 5-amino-1-(5-phospho-D-ribosyl)imidazole from N(2)-formyl-N(1)-(5-phospho-D-ribosyl)glycinamide: step 1/2. Its function is as follows. Part of the phosphoribosylformylglycinamidine synthase complex involved in the purines biosynthetic pathway. Catalyzes the ATP-dependent conversion of formylglycinamide ribonucleotide (FGAR) and glutamine to yield formylglycinamidine ribonucleotide (FGAM) and glutamate. The FGAM synthase complex is composed of three subunits. PurQ produces an ammonia molecule by converting glutamine to glutamate. PurL transfers the ammonia molecule to FGAR to form FGAM in an ATP-dependent manner. PurS interacts with PurQ and PurL and is thought to assist in the transfer of the ammonia molecule from PurQ to PurL. This is Phosphoribosylformylglycinamidine synthase subunit PurQ from Methanopyrus kandleri (strain AV19 / DSM 6324 / JCM 9639 / NBRC 100938).